We begin with the raw amino-acid sequence, 738 residues long: Ribosomal RNA large subunit methyltransferase K/L (738 aa).

Residues 46–157 (TAYRVCLWSR…ADQAVIGLDL (112 aa)) enclose the THUMP domain.

This sequence belongs to the methyltransferase superfamily. RlmKL family.

It is found in the cytoplasm. The catalysed reaction is guanosine(2445) in 23S rRNA + S-adenosyl-L-methionine = N(2)-methylguanosine(2445) in 23S rRNA + S-adenosyl-L-homocysteine + H(+). The enzyme catalyses guanosine(2069) in 23S rRNA + S-adenosyl-L-methionine = N(2)-methylguanosine(2069) in 23S rRNA + S-adenosyl-L-homocysteine + H(+). In terms of biological role, specifically methylates the guanine in position 2445 (m2G2445) and the guanine in position 2069 (m7G2069) of 23S rRNA. The polypeptide is Ribosomal RNA large subunit methyltransferase K/L (Methylococcus capsulatus (strain ATCC 33009 / NCIMB 11132 / Bath)).